Reading from the N-terminus, the 105-residue chain is Large ribosomal subunit protein uL24 (105 aa).

It belongs to the universal ribosomal protein uL24 family. Part of the 50S ribosomal subunit.

One of two assembly initiator proteins, it binds directly to the 5'-end of the 23S rRNA, where it nucleates assembly of the 50S subunit. Functionally, one of the proteins that surrounds the polypeptide exit tunnel on the outside of the subunit. The polypeptide is Large ribosomal subunit protein uL24 (Mycobacterium leprae (strain Br4923)).